We begin with the raw amino-acid sequence, 537 residues long: Bifunctional purine biosynthesis protein PurH (537 aa).

The MGS-like domain occupies 11–158; the sequence is ADIQRVRRAL…KNHAYVGVIV (148 aa).

The protein belongs to the PurH family.

It carries out the reaction (6R)-10-formyltetrahydrofolate + 5-amino-1-(5-phospho-beta-D-ribosyl)imidazole-4-carboxamide = 5-formamido-1-(5-phospho-D-ribosyl)imidazole-4-carboxamide + (6S)-5,6,7,8-tetrahydrofolate. It catalyses the reaction IMP + H2O = 5-formamido-1-(5-phospho-D-ribosyl)imidazole-4-carboxamide. Its pathway is purine metabolism; IMP biosynthesis via de novo pathway; 5-formamido-1-(5-phospho-D-ribosyl)imidazole-4-carboxamide from 5-amino-1-(5-phospho-D-ribosyl)imidazole-4-carboxamide (10-formyl THF route): step 1/1. The protein operates within purine metabolism; IMP biosynthesis via de novo pathway; IMP from 5-formamido-1-(5-phospho-D-ribosyl)imidazole-4-carboxamide: step 1/1. This is Bifunctional purine biosynthesis protein PurH from Parvibaculum lavamentivorans (strain DS-1 / DSM 13023 / NCIMB 13966).